The following is a 283-amino-acid chain: MGILLALLPAIAWGNILLVSVKMGGGAYSQTVGMTIGALFFATIMYVFTQPALTMTILIVGFISGLFWALGQVNQLKTVEKLGVSTTVTISTGMQLVATSIFGVIAFREWTTTTTIILGTIAILLIVVGVVFTSLDDKENAQPPGQLKKGLLTLIVSTFGYLVYVIIIRWYNIDGWSAILPQAVGMFVGAVVLTSKHKPFNKYAIRNALSGLLWGTGNLFLLLSLPRVGVATSFPLSQTGIVISTFGAIVFLGEKKTKRQLIFIALGSVLIIGGAVLLGMTKA.

10 consecutive transmembrane segments (helical) span residues 4–21 (LLAL…LVSV), 26–48 (GAYS…MYVF), 52–71 (ALTM…WALG), 84–106 (VSTT…GVIA), 110–132 (WTTT…GVVF), 151–173 (LLTL…WYNI), 178–195 (AILP…VLTS), 208–230 (ALSG…RVGV), 234–253 (FPLS…VFLG), and 260–279 (QLIF…VLLG).

Belongs to the GRP transporter (TC 2.A.7.5) family.

The protein resides in the cell membrane. The protein is Putative sugar uptake protein BA_0200/GBAA_0200/BAS0200 of Bacillus anthracis.